The following is a 156-amino-acid chain: ATP synthase subunit b (156 aa).

Residues 7 to 27 (IFFQMLVFFVLGWFTMKFVWP) traverse the membrane as a helical segment.

Belongs to the ATPase B chain family. In terms of assembly, F-type ATPases have 2 components, F(1) - the catalytic core - and F(0) - the membrane proton channel. F(1) has five subunits: alpha(3), beta(3), gamma(1), delta(1), epsilon(1). F(0) has three main subunits: a(1), b(2) and c(10-14). The alpha and beta chains form an alternating ring which encloses part of the gamma chain. F(1) is attached to F(0) by a central stalk formed by the gamma and epsilon chains, while a peripheral stalk is formed by the delta and b chains.

The protein resides in the cell inner membrane. Functionally, f(1)F(0) ATP synthase produces ATP from ADP in the presence of a proton or sodium gradient. F-type ATPases consist of two structural domains, F(1) containing the extramembraneous catalytic core and F(0) containing the membrane proton channel, linked together by a central stalk and a peripheral stalk. During catalysis, ATP synthesis in the catalytic domain of F(1) is coupled via a rotary mechanism of the central stalk subunits to proton translocation. Its function is as follows. Component of the F(0) channel, it forms part of the peripheral stalk, linking F(1) to F(0). The sequence is that of ATP synthase subunit b from Bordetella bronchiseptica (strain ATCC BAA-588 / NCTC 13252 / RB50) (Alcaligenes bronchisepticus).